The sequence spans 871 residues: Zinc finger protein 473 (871 aa).

In terms of domain architecture, KRAB spans 6 to 75 (VTLKDVGMDF…AGGSPEATSP (70 aa)). 2 disordered regions span residues 47 to 81 (PPRP…TETK) and 140 to 164 (NGES…TVST). Positions 71 to 81 (EATSPDVTETK) are enriched in polar residues. Residues 145–154 (TECKSHELKR) show a composition bias toward basic and acidic residues. A Glycyl lysine isopeptide (Lys-Gly) (interchain with G-Cter in SUMO2) cross-link involves residue Lys148. The segment at 209 to 231 (YQCSECGKSFSGSYRLTQHWITH) adopts a C2H2-type 1 zinc-finger fold. A C2H2-type 2; degenerate zinc finger spans residues 265-286 (YVCNEYGTTFSQSTYLWHQKTH). Residues 290–317 (KPCKSQDSDHPPSHDTQPGEHQKTHTDS) show a composition bias toward basic and acidic residues. The interval 290–318 (KPCKSQDSDHPPSHDTQPGEHQKTHTDSK) is disordered. Residues 312–552 (KTHTDSKSYN…GFFVSGKILD (241 aa)) are interaction with SLBP/pre-mRNA complex. 3 consecutive C2H2-type zinc fingers follow at residues 320–342 (YNCN…QKIH), 347–369 (YECS…QKTH), and 375–397 (SECQ…QALH). The segment at 403-425 (YKCNERGKSFRHNSTLKIHQRVH) adopts a C2H2-type 6; degenerate zinc-finger fold. Lys419 is covalently cross-linked (Glycyl lysine isopeptide (Lys-Gly) (interchain with G-Cter in SUMO2)). C2H2-type zinc fingers lie at residues 431 to 453 (YKCS…RRIH), 459 to 481 (HKCQ…QAIH), 487 to 509 (YSCA…QKMH), and 515 to 537 (YECQ…ESVH). Residues Lys549 and Lys558 each participate in a glycyl lysine isopeptide (Lys-Gly) (interchain with G-Cter in SUMO2) cross-link. C2H2-type zinc fingers lie at residues 562–584 (FKCN…ERIH) and 591–613 (FECD…QRIH). Lys635 participates in a covalent cross-link: Glycyl lysine isopeptide (Lys-Gly) (interchain with G-Cter in SUMO2). 8 C2H2-type zinc fingers span residues 646–668 (FKCN…QLIH), 674–696 (FKCS…ERTH), 702–724 (LVCN…QRIH), 730–752 (YVCD…QRIH), 758–780 (YVCQ…RRVH), 786–808 (YRCG…QRIH), 814–836 (YSCN…LRVH), and 842–864 (YQCQ…QRVH).

This sequence belongs to the krueppel C2H2-type zinc-finger protein family. Interacts with the SLBP/pre-mRNA complex but not with SLBP alone. Interacts with LSM11 in a U7 snRNP-dependent manner.

The protein localises to the nucleus. Functionally, involved in histone 3'-end pre-mRNA processing by associating with U7 snRNP and interacting with SLBP/pre-mRNA complex. Increases histone 3'-end pre-mRNA processing but has no effect on U7 snRNP levels, when overexpressed. Required for cell cycle progression from G1 to S phases. This chain is Zinc finger protein 473 (ZNF473), found in Homo sapiens (Human).